We begin with the raw amino-acid sequence, 39 residues long: Cytochrome b559 subunit beta (39 aa).

A helical transmembrane segment spans residues 14–30; that stretch reads WLAVHGLAIPTVFFLGS. His18 is a binding site for heme.

The protein belongs to the PsbE/PsbF family. As to quaternary structure, heterodimer of an alpha subunit and a beta subunit. PSII is composed of 1 copy each of membrane proteins PsbA, PsbB, PsbC, PsbD, PsbE, PsbF, PsbH, PsbI, PsbJ, PsbK, PsbL, PsbM, PsbT, PsbX, PsbY, PsbZ, Psb30/Ycf12, at least 3 peripheral proteins of the oxygen-evolving complex and a large number of cofactors. It forms dimeric complexes. Requires heme b as cofactor.

The protein resides in the plastid membrane. This b-type cytochrome is tightly associated with the reaction center of photosystem II (PSII). PSII is a light-driven water:plastoquinone oxidoreductase that uses light energy to abstract electrons from H(2)O, generating O(2) and a proton gradient subsequently used for ATP formation. It consists of a core antenna complex that captures photons, and an electron transfer chain that converts photonic excitation into a charge separation. The protein is Cytochrome b559 subunit beta of Cuscuta gronovii (Common dodder).